Consider the following 236-residue polypeptide: 2,3,4,5-tetrahydropyridine-2,6-dicarboxylate N-acetyltransferase (236 aa).

It belongs to the transferase hexapeptide repeat family. DapH subfamily.

The catalysed reaction is (S)-2,3,4,5-tetrahydrodipicolinate + acetyl-CoA + H2O = L-2-acetamido-6-oxoheptanedioate + CoA. Its pathway is amino-acid biosynthesis; L-lysine biosynthesis via DAP pathway; LL-2,6-diaminopimelate from (S)-tetrahydrodipicolinate (acetylase route): step 1/3. Functionally, catalyzes the transfer of an acetyl group from acetyl-CoA to tetrahydrodipicolinate. In Clostridium botulinum (strain Loch Maree / Type A3), this protein is 2,3,4,5-tetrahydropyridine-2,6-dicarboxylate N-acetyltransferase.